A 558-amino-acid polypeptide reads, in one-letter code: Urocanate hydratase (558 aa).

NAD(+)-binding positions include 54–55 (GG), glutamine 132, 178–180 (GMG), glutamate 198, 244–245 (NA), 265–269 (QTSAH), 275–276 (YL), and tyrosine 324. Residue cysteine 412 is part of the active site. An NAD(+)-binding site is contributed by glycine 494.

Belongs to the urocanase family. The cofactor is NAD(+).

It is found in the cytoplasm. It catalyses the reaction 4-imidazolone-5-propanoate = trans-urocanate + H2O. Its pathway is amino-acid degradation; L-histidine degradation into L-glutamate; N-formimidoyl-L-glutamate from L-histidine: step 2/3. Functionally, catalyzes the conversion of urocanate to 4-imidazolone-5-propionate. The sequence is that of Urocanate hydratase from Acinetobacter baumannii (strain ACICU).